The chain runs to 361 residues: Ankyrin repeat domain-containing protein 16 (361 aa).

ANK repeat units follow at residues 36–66, 70–99, 103–132, 136–165, 170–200, 204–234, 238–268, 273–302, and 306–335; these read AGDT…DIEA, DYKR…AVDC, ADWT…NPLL, DGWN…GAWK, IRRT…EPDY, CGVT…CLSA, LGAQ…DVDV, THLT…DINS, and KNRS…KDSE.

Interacts with AARS; the interaction is direct.

It is found in the cytoplasm. The protein resides in the nucleus. Functionally, required to prevent the misactivation of serine (Ser) with tRNA(Ala) by promoting the hydrolysis of Ser-mischarged tRNA(Ala), thereby playing a role in translational fidelity. Binds directly to the catalytic domain of AARS/AlaRS and captures Ser that is misactivated by AARS/AlaRS, preventing the charging of Ser adenylates to tRNA(Ala) and precluding Ser misincorporation in nascent peptides. This Homo sapiens (Human) protein is Ankyrin repeat domain-containing protein 16.